We begin with the raw amino-acid sequence, 390 residues long: Phosphopentomutase (390 aa).

Residues D14, D286, H291, D327, H328, and H339 each contribute to the Mn(2+) site.

The protein belongs to the phosphopentomutase family. It depends on Mn(2+) as a cofactor.

The protein resides in the cytoplasm. It catalyses the reaction 2-deoxy-alpha-D-ribose 1-phosphate = 2-deoxy-D-ribose 5-phosphate. The enzyme catalyses alpha-D-ribose 1-phosphate = D-ribose 5-phosphate. It participates in carbohydrate degradation; 2-deoxy-D-ribose 1-phosphate degradation; D-glyceraldehyde 3-phosphate and acetaldehyde from 2-deoxy-alpha-D-ribose 1-phosphate: step 1/2. Functionally, isomerase that catalyzes the conversion of deoxy-ribose 1-phosphate (dRib-1-P) and ribose 1-phosphate (Rib-1-P) to deoxy-ribose 5-phosphate (dRib-5-P) and ribose 5-phosphate (Rib-5-P), respectively. The protein is Phosphopentomutase of Exiguobacterium sibiricum (strain DSM 17290 / CCUG 55495 / CIP 109462 / JCM 13490 / 255-15).